Consider the following 157-residue polypeptide: Probable succinate transporter subunit YjjB (157 aa).

The next 4 membrane-spanning stretches (helical) occupy residues 8–28 (FALA…AMVF), 50–70 (MILM…SMLV), 87–107 (VFTV…TAMI), and 129–149 (FLTA…PGLW).

This sequence belongs to the ThrE exporter (TC 2.A.79) family. In terms of assembly, the transporter is composed of YjjB and YjjP.

It is found in the cell inner membrane. Functionally, involved in succinate export with YjjP. Both proteins are required for export. This is Probable succinate transporter subunit YjjB from Escherichia coli (strain ATCC 8739 / DSM 1576 / NBRC 3972 / NCIMB 8545 / WDCM 00012 / Crooks).